The following is a 670-amino-acid chain: Amyloid beta A4 precursor protein-binding family B member 1-interacting protein (670 aa).

Ser55 carries the post-translational modification Phosphoserine. The region spanning 179-266 (KKLVVKVHMD…KVLFLEKEER (88 aa)) is the Ras-associating domain. Residues 313 to 422 (VPELEGALYL…WVMGIRIAKY (110 aa)) form the PH domain. The disordered stretch occupies residues 449–653 (VGTPMPAQPS…PGAPGNSEQD (205 aa)). Over residues 456–475 (QPSTVSSGLKTGTSQPNGQM) the composition is skewed to polar residues. Ser532 is modified (phosphoserine). Residue Thr534 is modified to Phosphothreonine. Phosphoserine is present on Ser537. Composition is skewed to pro residues over residues 553–567 (PHPPENFLPPPPPPP), 576–599 (LPPPPPPPYLEEPPDFVPPPPPPA), 606–615 (LPPPPPPPPC), and 625–634 (PLPPKKPLVP).

Belongs to the MRL family. Interacts, through the N-terminal Pro-rich region, with the WW domain of APBB1. Interacts with RAP1A, PFN1, VASP and ENAH. Ubiquitously expressed with high expression in the hematopoietic system.

It localises to the cell membrane. It is found in the cell projection. The protein localises to the lamellipodium. The protein resides in the cell junction. Its subcellular location is the focal adhesion. It localises to the cytoplasm. It is found in the cytoskeleton. In terms of biological role, appears to function in the signal transduction from Ras activation to actin cytoskeletal remodeling. Suppresses insulin-induced promoter activities through AP1 and SRE. Mediates Rap1-induced adhesion. In Mus musculus (Mouse), this protein is Amyloid beta A4 precursor protein-binding family B member 1-interacting protein (Apbb1ip).